Here is a 326-residue protein sequence, read N- to C-terminus: Homocysteine S-methyltransferase 1 (326 aa).

The Hcy-binding domain occupies 9-323 (LLEDLIKKCG…STINAISRDL (315 aa)). 3 residues coordinate Zn(2+): C241, C308, and C309.

As to quaternary structure, monomer. Requires Zn(2+) as cofactor. As to expression, expressed predominantly in roots. Expressed in rosette leaves, cauline leaves and developing seeds.

It catalyses the reaction S-methyl-L-methionine + L-homocysteine = 2 L-methionine + H(+). Strongly inhibited by methionine. Its function is as follows. Catalyzes methyl transfer from S-methylmethionine (SMM) to adenosyl-L-homocysteine (AdoMet). SMM degradation (by HMT-1, HMT-2 and HMT-3) and biosynthesis (by MMT1) constitute the SMM cycle in plants, which is probably required to achieve short term control of AdoMet level. This Arabidopsis thaliana (Mouse-ear cress) protein is Homocysteine S-methyltransferase 1 (HMT-1).